Here is a 105-residue protein sequence, read N- to C-terminus: Large ribosomal subunit protein uL24 (105 aa).

This sequence belongs to the universal ribosomal protein uL24 family. In terms of assembly, part of the 50S ribosomal subunit.

In terms of biological role, one of two assembly initiator proteins, it binds directly to the 5'-end of the 23S rRNA, where it nucleates assembly of the 50S subunit. Its function is as follows. One of the proteins that surrounds the polypeptide exit tunnel on the outside of the subunit. This Clostridium kluyveri (strain ATCC 8527 / DSM 555 / NBRC 12016 / NCIMB 10680 / K1) protein is Large ribosomal subunit protein uL24.